The following is a 233-amino-acid chain: 4'-phosphopantetheinyl transferase psf-1 (233 aa).

The Mg(2+) site is built by aspartate 110, glutamate 112, and glutamate 154. A peptidyl carrier protein binding region spans residues glycine 161–cysteine 192.

The protein belongs to the P-Pant transferase superfamily. Gsp/Sfp/HetI/AcpT family. Mg(2+) is required as a cofactor.

The enzyme catalyses apo-[peptidyl-carrier protein] + CoA = holo-[peptidyl-carrier protein] + adenosine 3',5'-bisphosphate + H(+). Its function is as follows. Probably activates the peptidyl carrier protein (PCP) domains of surfactin synthetase by transferring the 4'-phosphopantetheinyl moiety of coenzyme A (CoA) to a serine residue. Required for the production of the lipopeptide antibiotic, surfactin. This Bacillus pumilus (Bacillus mesentericus) protein is 4'-phosphopantetheinyl transferase psf-1 (psf-1).